The following is a 292-amino-acid chain: NAD kinase (292 aa).

The Proton acceptor role is filled by aspartate 73. Residues 73 to 74 (DG), 147 to 148 (NE), histidine 158, arginine 175, aspartate 177, 188 to 193 (TAYSLS), and glutamine 247 contribute to the NAD(+) site.

It belongs to the NAD kinase family. The cofactor is a divalent metal cation.

It is found in the cytoplasm. The enzyme catalyses NAD(+) + ATP = ADP + NADP(+) + H(+). Its function is as follows. Involved in the regulation of the intracellular balance of NAD and NADP, and is a key enzyme in the biosynthesis of NADP. Catalyzes specifically the phosphorylation on 2'-hydroxyl of the adenosine moiety of NAD to yield NADP. The protein is NAD kinase of Escherichia coli O157:H7.